Here is a 449-residue protein sequence, read N- to C-terminus: MFS acetylaranotin efflux transporter ataA (449 aa).

Transmembrane regions (helical) follow at residues 6–26 (SVYV…TAIP), 45–65 (YLLV…YFPI), 67–87 (WVFL…GAAP), 115–135 (FYIN…FLHV), 155–175 (LGVV…QWGG), 182–202 (NGRI…FLAI), and 227–247 (LFMT…PIWF). N-linked (GlcNAc...) asparagine glycosylation is present at N252. The next 5 helical transmembrane spans lie at 260 to 280 (IMCL…GGGV), 287 to 307 (VPFF…MTTF), 321 to 341 (VLLG…VQAV), 349 to 369 (VGTA…VSVA), and 420 to 440 (ALVS…LGAV).

The protein belongs to the major facilitator superfamily.

The protein resides in the cell membrane. Its function is as follows. Efflux pump that may provide the dual role of acetylaranotin export and self-protection by allowing the fungus to evade the harmful effect of its own acetylaranotin production. The polypeptide is MFS acetylaranotin efflux transporter ataA (Aspergillus terreus (strain NIH 2624 / FGSC A1156)).